Reading from the N-terminus, the 557-residue chain is Urocanate hydratase (557 aa).

Residues 53–54 (GG), Q131, 177–179 (GMG), 197–202 (ECQQSR), 243–244 (NA), 264–268 (QTSAH), 274–275 (YL), and 323–324 (YG) each bind NAD(+). Residue C411 is part of the active site. NAD(+)-binding positions include 455 to 456 (RE) and G493.

As to quaternary structure, homodimer. NAD(+) is required as a cofactor.

The protein localises to the cytoplasm. The catalysed reaction is 4-imidazolone-5-propanoate = trans-urocanate + H2O. It participates in amino-acid degradation; L-histidine degradation into L-glutamate; N-formimidoyl-L-glutamate from L-histidine: step 2/3. Its function is as follows. Catalyzes the conversion of urocanate to 4-imidazolone-5-propionate. In Pseudomonas putida (Arthrobacter siderocapsulatus), this protein is Urocanate hydratase.